We begin with the raw amino-acid sequence, 206 residues long: Large ribosomal subunit protein uL4 (206 aa).

The disordered stretch occupies residues 43 to 78 (NQRQGTHDTKTRAEVRGGGRKPWRQKGTGRARAGSS). Residues 47–59 (GTHDTKTRAEVRG) show a composition bias toward basic and acidic residues. The span at 60–71 (GGRKPWRQKGTG) shows a compositional bias: basic residues.

This sequence belongs to the universal ribosomal protein uL4 family. Part of the 50S ribosomal subunit.

One of the primary rRNA binding proteins, this protein initially binds near the 5'-end of the 23S rRNA. It is important during the early stages of 50S assembly. It makes multiple contacts with different domains of the 23S rRNA in the assembled 50S subunit and ribosome. Functionally, forms part of the polypeptide exit tunnel. This is Large ribosomal subunit protein uL4 from Desulforamulus reducens (strain ATCC BAA-1160 / DSM 100696 / MI-1) (Desulfotomaculum reducens).